A 426-amino-acid polypeptide reads, in one-letter code: Glutamate-1-semialdehyde 2,1-aminomutase (426 aa).

At Lys265 the chain carries N6-(pyridoxal phosphate)lysine.

This sequence belongs to the class-III pyridoxal-phosphate-dependent aminotransferase family. HemL subfamily. As to quaternary structure, homodimer. It depends on pyridoxal 5'-phosphate as a cofactor.

The protein resides in the cytoplasm. The catalysed reaction is (S)-4-amino-5-oxopentanoate = 5-aminolevulinate. The protein operates within porphyrin-containing compound metabolism; protoporphyrin-IX biosynthesis; 5-aminolevulinate from L-glutamyl-tRNA(Glu): step 2/2. This Escherichia coli (strain K12 / DH10B) protein is Glutamate-1-semialdehyde 2,1-aminomutase.